Reading from the N-terminus, the 151-residue chain is Exosporium protein B (151 aa).

Its subcellular location is the spore wall. This is Exosporium protein B from Clostridium sporogenes (strain ATCC 15579).